The following is a 155-amino-acid chain: Transcription antitermination protein NusB (155 aa).

The protein belongs to the NusB family.

In terms of biological role, involved in transcription antitermination. Required for transcription of ribosomal RNA (rRNA) genes. Binds specifically to the boxA antiterminator sequence of the ribosomal RNA (rrn) operons. This is Transcription antitermination protein NusB from Aliivibrio fischeri (strain ATCC 700601 / ES114) (Vibrio fischeri).